Reading from the N-terminus, the 193-residue chain is Imidazoleglycerol-phosphate dehydratase (193 aa).

It belongs to the imidazoleglycerol-phosphate dehydratase family.

Its subcellular location is the cytoplasm. The catalysed reaction is D-erythro-1-(imidazol-4-yl)glycerol 3-phosphate = 3-(imidazol-4-yl)-2-oxopropyl phosphate + H2O. Its pathway is amino-acid biosynthesis; L-histidine biosynthesis; L-histidine from 5-phospho-alpha-D-ribose 1-diphosphate: step 6/9. The polypeptide is Imidazoleglycerol-phosphate dehydratase (Metallosphaera sedula (strain ATCC 51363 / DSM 5348 / JCM 9185 / NBRC 15509 / TH2)).